An 847-amino-acid polypeptide reads, in one-letter code: Follistatin-related protein 5 (847 aa).

An N-terminal signal peptide occupies residues 1–20 (MFKCWSVVLVLGFIFLESEG). The region spanning 83-135 (GQAECACMDLCKRHYKPVCGSDGEFYENHCEVHRAACLKKQKITIVHNEDCFF) is the Kazal-like domain. 3 disulfides stabilise this stretch: Cys89–Cys119, Cys93–Cys112, and Cys101–Cys133. 2 consecutive EF-hand domains span residues 175 to 210 (RKKL…EELG) and 211 to 246 (KDLF…QVIQ). Asp188, Asp190, Asn192, Glu199, Asp226, Asn228, Asp230, His232, and Glu237 together coordinate Ca(2+). 2 consecutive Ig-like domains span residues 250 to 337 (PEDQ…IFQV) and 341 to 426 (PVIR…EDIS). 2 disulfides stabilise this stretch: Cys270/Cys321 and Cys362/Cys413. N-linked (GlcNAc...) asparagine glycans are attached at residues Asn318 and Asn394.

It localises to the secreted. The chain is Follistatin-related protein 5 (FSTL5) from Homo sapiens (Human).